A 244-amino-acid chain; its full sequence is U11/U12 small nuclear ribonucleoprotein 35 kDa protein (244 aa).

An RRM domain is found at 51–129 (LTLFVARLNS…HEIFVDYELE (79 aa)). Basic and acidic residues predominate over residues 146–162 (GKKESGQLRFGGRDRPF). Residues 146–244 (GKKESGQLRF…KTRDKRDRSK (99 aa)) form a disordered region. K172 participates in a covalent cross-link: Glycyl lysine isopeptide (Lys-Gly) (interchain with G-Cter in SUMO2). Composition is skewed to basic and acidic residues over residues 173–185 (NEPH…ERRE) and 192–244 (RHWD…DRSK).

Component of the U11/U12 snRNPs that are part of the U12-type spliceosome.

The protein resides in the nucleus. This is U11/U12 small nuclear ribonucleoprotein 35 kDa protein (Snrnp35) from Rattus norvegicus (Rat).